We begin with the raw amino-acid sequence, 1013 residues long: Endosome/lysosome-associated apoptosis and autophagy regulator 1 (1013 aa).

The signal sequence occupies residues 1–41; sequence MAEPGHSHHLSARVRGRTERRIPRLWRLLLWAGTAFQVTQG. Over 42–910 the chain is Extracellular; sequence TGPELHACKE…ICKTIDFWLK (869 aa). A glycan (N-linked (GlcNAc...) asparagine) is linked at asparagine 153. 3 disulfide bridges follow: cysteine 278–cysteine 295, cysteine 308–cysteine 330, and cysteine 311–cysteine 342. N-linked (GlcNAc...) asparagine glycans are attached at residues asparagine 404 and asparagine 672. Positions 656-858 constitute an MRH domain; it reads NDCTFSRNTP…LWESAAACPL (203 aa). 4 disulfides stabilise this stretch: cysteine 658–cysteine 704, cysteine 714–cysteine 739, cysteine 808–cysteine 844, and cysteine 820–cysteine 856. The helical transmembrane segment at 911–931 threads the bilayer; sequence VGISAGTCTAILLTVLTCYFW. Topologically, residues 932–1013 are cytoplasmic; sequence KKNQKLEYKY…TSSGGLDMDL (82 aa).

Belongs to the ELAPOR family. In terms of assembly, interacts with HSPA5; may regulate the function of HSPA5 in apoptosis and cell proliferation. In terms of tissue distribution, expressed in normal endometrium but overexpressed in endometroid tumors.

It is found in the cell membrane. Its subcellular location is the late endosome membrane. The protein resides in the golgi apparatus. The protein localises to the trans-Golgi network membrane. It localises to the lysosome membrane. It is found in the endoplasmic reticulum membrane. Its function is as follows. May protect cells from cell death by inducing cytosolic vacuolization and up-regulating the autophagy pathway. May play a role in apoptosis and cell proliferation through its interaction with HSPA5. The sequence is that of Endosome/lysosome-associated apoptosis and autophagy regulator 1 from Homo sapiens (Human).